The sequence spans 552 residues: Urocanate hydratase (552 aa).

Residues 49-50 (GG), Gln127, 173-175 (GMG), Asp193, 239-240 (NA), 260-264 (QTSAH), 270-271 (YI), and Tyr319 each bind NAD(+). Residue Cys407 is part of the active site. Residue Gly489 participates in NAD(+) binding.

Belongs to the urocanase family. The cofactor is NAD(+).

Its subcellular location is the cytoplasm. It carries out the reaction 4-imidazolone-5-propanoate = trans-urocanate + H2O. It functions in the pathway amino-acid degradation; L-histidine degradation into L-glutamate; N-formimidoyl-L-glutamate from L-histidine: step 2/3. Functionally, catalyzes the conversion of urocanate to 4-imidazolone-5-propionate. The sequence is that of Urocanate hydratase from Bacillus anthracis (strain CDC 684 / NRRL 3495).